A 468-amino-acid chain; its full sequence is Serine--tRNA ligase (468 aa).

272–274 (TAE) contributes to the L-serine binding site. 303–305 (RAE) is an ATP binding site. An L-serine-binding site is contributed by glutamate 326. 390-393 (EISS) serves as a coordination point for ATP. Serine 426 is a binding site for L-serine.

This sequence belongs to the class-II aminoacyl-tRNA synthetase family. Type-1 seryl-tRNA synthetase subfamily. Homodimer. The tRNA molecule binds across the dimer.

The protein resides in the cytoplasm. The catalysed reaction is tRNA(Ser) + L-serine + ATP = L-seryl-tRNA(Ser) + AMP + diphosphate + H(+). It catalyses the reaction tRNA(Sec) + L-serine + ATP = L-seryl-tRNA(Sec) + AMP + diphosphate + H(+). It functions in the pathway aminoacyl-tRNA biosynthesis; selenocysteinyl-tRNA(Sec) biosynthesis; L-seryl-tRNA(Sec) from L-serine and tRNA(Sec): step 1/1. Functionally, catalyzes the attachment of serine to tRNA(Ser). Is also able to aminoacylate tRNA(Sec) with serine, to form the misacylated tRNA L-seryl-tRNA(Sec), which will be further converted into selenocysteinyl-tRNA(Sec). The sequence is that of Serine--tRNA ligase from Xanthobacter autotrophicus (strain ATCC BAA-1158 / Py2).